Reading from the N-terminus, the 59-residue chain is Conotoxin Sr5.4 (59 aa).

The first 22 residues, 1–22 (MRCLPVFVILLLLIASAPSVDA), serve as a signal peptide directing secretion. A propeptide spanning residues 23-44 (QLKTKDDVPLASFHDNAKGTQH) is cleaved from the precursor.

This sequence belongs to the conotoxin T superfamily. Post-translationally, contains 2 disulfide bonds that can be either 'C1-C3, C2-C4' or 'C1-C4, C2-C3', since these disulfide connectivities have been observed for conotoxins with cysteine framework V (for examples, see AC P0DQQ7 and AC P81755). Expressed by the venom duct.

It localises to the secreted. In Conus spurius (Alphabet cone), this protein is Conotoxin Sr5.4.